Consider the following 182-residue polypeptide: Putative manganese efflux pump MntP (182 aa).

6 consecutive transmembrane segments (helical) span residues 6–26, 37–57, 71–91, 101–121, 131–151, and 162–182; these read LIPL…VSLG, ILYI…IGMV, HFAG…SSIL, IGIS…SVGL, VITI…GLFI, and YGEI…LFPI.

This sequence belongs to the MntP (TC 9.B.29) family.

The protein localises to the cell membrane. Its function is as follows. Probably functions as a manganese efflux pump. This Bacillus cereus (strain Q1) protein is Putative manganese efflux pump MntP.